The chain runs to 716 residues: MSPHTGWPRTVNSSLLKKHRSSLCTCQHTSSFLPRSFSTTADRHVQQSADFSSTSRSYDRLGRRAKEKLLDREFFLSLLSSASTKREAKSYLARLKAQYPKSPDENKPEPEKLATAPTLPSGVNLGSFYGASRSVYESPVFRQGPSPTAPPSLEPVERLHLALVRLSTPQSLDDNIIDGVAKTLSQLNRLGLTCCVVVDPGTEGVASTLRQVAIEQADRLAVAIQKQPDSKSLRLDSVFSIDASRPGLPQVSSRKALLNPLRHGHTVILTPIAYTEDVPRAIIVPANDAVLALTKELAGLASTPDPDEDPMVTAERIGRLQKEVSLDRVILLDSLGGIPAFNRRQTSHVFINMEQEYDDIENELLQAREMVPATETSLLKAGPSSIADNNPVSKFVNAEVVPVPSGPTQELKTAAPQRSAIEGHLENLRVAQKALTMLPAASSGIITSPFEVASSAQPSPTSEFSAVGTRRQRNPLIHNLLTDKPLLSSSLPMSRRGPTNNGQGTVYPVTSHTTFVKRGMPLTMLPNPWTEPWTPQSRPRLKLDDPSIDLPRLVHLIEDSFDRKLDVQDYLNRVNDRLAGLIIAGEYEGGAILTWELPPGVEDDGSEASNARMVPYLDKFAVLKRSQGAGGVADIVFNAMVRSCFPNGVCWRSRKNNPVNKWYFERSLGTWKLSDTNWTMFWTTPSLVEDSQKFRDYEAVCRSTQPSWADDTGVVD.

Residues 1 to 44 constitute a mitochondrion transit peptide; that stretch reads MSPHTGWPRTVNSSLLKKHRSSLCTCQHTSSFLPRSFSTTADRH. Disordered stretches follow at residues 99–119 and 487–508; these read YPKSPDENKPEPEKLATAPTL and LSSSLPMSRRGPTNNGQGTVYP. A compositionally biased stretch (basic and acidic residues) spans 102-112; that stretch reads SPDENKPEPEK. The segment covering 497-508 has biased composition (polar residues); the sequence is GPTNNGQGTVYP. The 170-residue stretch at 537–706 folds into the N-acetyltransferase domain; it reads SRPRLKLDDP…YEAVCRSTQP (170 aa).

This sequence belongs to the acetyltransferase family.

It localises to the mitochondrion. It catalyses the reaction L-glutamate + acetyl-CoA = N-acetyl-L-glutamate + CoA + H(+). It functions in the pathway amino-acid biosynthesis; L-arginine biosynthesis; N(2)-acetyl-L-ornithine from L-glutamate: step 1/4. N-acetylglutamate synthase involved in arginine biosynthesis. The protein is Amino-acid acetyltransferase, mitochondrial (arg2) of Neosartorya fischeri (strain ATCC 1020 / DSM 3700 / CBS 544.65 / FGSC A1164 / JCM 1740 / NRRL 181 / WB 181) (Aspergillus fischerianus).